The sequence spans 523 residues: UvrABC system protein C (523 aa).

One can recognise a GIY-YIG domain in the interval 15-93 (HLPGCYLFKD…IKKHWPRYNI (79 aa)). The region spanning 197-232 (RELIESMETEMKEMAAKQMFEQAMELRDEIAALEYL) is the UVR domain.

The protein belongs to the UvrC family. In terms of assembly, interacts with UvrB in an incision complex.

It is found in the cytoplasm. Its function is as follows. The UvrABC repair system catalyzes the recognition and processing of DNA lesions. UvrC both incises the 5' and 3' sides of the lesion. The N-terminal half is responsible for the 3' incision and the C-terminal half is responsible for the 5' incision. The sequence is that of UvrABC system protein C from Methanosarcina mazei (strain ATCC BAA-159 / DSM 3647 / Goe1 / Go1 / JCM 11833 / OCM 88) (Methanosarcina frisia).